The chain runs to 261 residues: uncharacterized protein (261 aa).

The protein resides in the plastid. It localises to the chloroplast. This is an uncharacterized protein from Mesostigma viride (Green alga).